Reading from the N-terminus, the 112-residue chain is Large ribosomal subunit protein eL22 (112 aa).

This sequence belongs to the eukaryotic ribosomal protein eL22 family. In terms of assembly, component of the large ribosomal subunit.

The protein resides in the cytoplasm. This chain is Large ribosomal subunit protein eL22 (RPL22), found in Encephalitozoon cuniculi (strain GB-M1) (Microsporidian parasite).